Here is a 251-residue protein sequence, read N- to C-terminus: Hydroxyacylglutathione hydrolase (251 aa).

Residues histidine 59, histidine 61, aspartate 63, histidine 64, histidine 118, aspartate 141, and histidine 179 each coordinate Zn(2+).

Belongs to the metallo-beta-lactamase superfamily. Glyoxalase II family. As to quaternary structure, monomer. The cofactor is Zn(2+).

The enzyme catalyses an S-(2-hydroxyacyl)glutathione + H2O = a 2-hydroxy carboxylate + glutathione + H(+). Its pathway is secondary metabolite metabolism; methylglyoxal degradation; (R)-lactate from methylglyoxal: step 2/2. In terms of biological role, thiolesterase that catalyzes the hydrolysis of S-D-lactoyl-glutathione to form glutathione and D-lactic acid. This Prochlorococcus marinus (strain NATL1A) protein is Hydroxyacylglutathione hydrolase.